Here is a 387-residue protein sequence, read N- to C-terminus: Succinate--CoA ligase [ADP-forming] subunit beta (387 aa).

Positions 9–236 (RDLFEKYGVP…KAAADPLEAK (228 aa)) constitute an ATP-grasp domain. ATP is bound by residues lysine 45, 52 to 54 (GRG), alanine 94, and glutamate 99. 2 residues coordinate Mg(2+): asparagine 191 and aspartate 205. Residues asparagine 256 and 318–320 (GIT) each bind substrate.

Belongs to the succinate/malate CoA ligase beta subunit family. In terms of assembly, heterotetramer of two alpha and two beta subunits. The cofactor is Mg(2+).

It carries out the reaction succinate + ATP + CoA = succinyl-CoA + ADP + phosphate. It catalyses the reaction GTP + succinate + CoA = succinyl-CoA + GDP + phosphate. It functions in the pathway carbohydrate metabolism; tricarboxylic acid cycle; succinate from succinyl-CoA (ligase route): step 1/1. In terms of biological role, succinyl-CoA synthetase functions in the citric acid cycle (TCA), coupling the hydrolysis of succinyl-CoA to the synthesis of either ATP or GTP and thus represents the only step of substrate-level phosphorylation in the TCA. The beta subunit provides nucleotide specificity of the enzyme and binds the substrate succinate, while the binding sites for coenzyme A and phosphate are found in the alpha subunit. The chain is Succinate--CoA ligase [ADP-forming] subunit beta from Leifsonia xyli subsp. xyli (strain CTCB07).